Here is a 332-residue protein sequence, read N- to C-terminus: UPF0158 protein TC_0713 (332 aa).

Disordered stretches follow at residues 196–215 (ALNPRPKRGRPPKQSAKVEA) and 291–332 (LGYD…KARS). Residues 295–316 (GDGDASDFFGEEYDDDDDDDDD) are compositionally biased toward acidic residues. The span at 320-332 (KKAAKRGRKKARS) shows a compositional bias: basic residues.

It belongs to the UPF0158 family.

This chain is UPF0158 protein TC_0713, found in Chlamydia muridarum (strain MoPn / Nigg).